The primary structure comprises 235 residues: Small ribosomal subunit protein eS6 (235 aa).

The segment at 190–212 (GFHPRERGERRRKSVRGRMIPDP) is disordered.

It belongs to the eukaryotic ribosomal protein eS6 family.

The polypeptide is Small ribosomal subunit protein eS6 (Aeropyrum pernix (strain ATCC 700893 / DSM 11879 / JCM 9820 / NBRC 100138 / K1)).